The chain runs to 63 residues: MYMYVNPNYVLVGGPCCGPCGGCGPCGGCGPCCGGCGPCCGPCGGCGPCCGGTSSFCGCGPCC.

Belongs to the MST(3)CGP family. In terms of tissue distribution, testis.

The polypeptide is Male-specific sperm protein Mst84Da (Mst84Da) (Drosophila melanogaster (Fruit fly)).